The sequence spans 289 residues: 4-hydroxy-3-methylbut-2-enyl diphosphate reductase (289 aa).

Residue cysteine 13 coordinates [4Fe-4S] cluster. Residues histidine 42 and histidine 74 each contribute to the (2E)-4-hydroxy-3-methylbut-2-enyl diphosphate site. 2 residues coordinate dimethylallyl diphosphate: histidine 42 and histidine 74. The isopentenyl diphosphate site is built by histidine 42 and histidine 74. Cysteine 96 is a binding site for [4Fe-4S] cluster. (2E)-4-hydroxy-3-methylbut-2-enyl diphosphate is bound at residue histidine 124. Dimethylallyl diphosphate is bound at residue histidine 124. Histidine 124 lines the isopentenyl diphosphate pocket. Glutamate 126 acts as the Proton donor in catalysis. Threonine 165 is a binding site for (2E)-4-hydroxy-3-methylbut-2-enyl diphosphate. [4Fe-4S] cluster is bound at residue cysteine 193. (2E)-4-hydroxy-3-methylbut-2-enyl diphosphate is bound by residues serine 221, asparagine 223, and serine 265. Dimethylallyl diphosphate contacts are provided by serine 221, asparagine 223, and serine 265. Isopentenyl diphosphate-binding residues include serine 221, asparagine 223, and serine 265.

This sequence belongs to the IspH family. [4Fe-4S] cluster serves as cofactor.

The catalysed reaction is isopentenyl diphosphate + 2 oxidized [2Fe-2S]-[ferredoxin] + H2O = (2E)-4-hydroxy-3-methylbut-2-enyl diphosphate + 2 reduced [2Fe-2S]-[ferredoxin] + 2 H(+). The enzyme catalyses dimethylallyl diphosphate + 2 oxidized [2Fe-2S]-[ferredoxin] + H2O = (2E)-4-hydroxy-3-methylbut-2-enyl diphosphate + 2 reduced [2Fe-2S]-[ferredoxin] + 2 H(+). It participates in isoprenoid biosynthesis; dimethylallyl diphosphate biosynthesis; dimethylallyl diphosphate from (2E)-4-hydroxy-3-methylbutenyl diphosphate: step 1/1. The protein operates within isoprenoid biosynthesis; isopentenyl diphosphate biosynthesis via DXP pathway; isopentenyl diphosphate from 1-deoxy-D-xylulose 5-phosphate: step 6/6. Its activity is regulated as follows. Highly sensitive to dioxygen. Its function is as follows. Catalyzes the conversion of 1-hydroxy-2-methyl-2-(E)-butenyl 4-diphosphate (HMBPP) into a mixture of isopentenyl diphosphate (IPP) and dimethylallyl diphosphate (DMAPP). Acts in the terminal step of the DOXP/MEP pathway for isoprenoid precursor biosynthesis. This Aquifex aeolicus (strain VF5) protein is 4-hydroxy-3-methylbut-2-enyl diphosphate reductase.